A 111-amino-acid polypeptide reads, in one-letter code: Large ribosomal subunit protein uL24 (111 aa).

The tract at residues 85–111 is disordered; sequence NTNDPRRKDIINRKASRQKEEQGGKAQ. The span at 88-111 shows a compositional bias: basic and acidic residues; sequence DPRRKDIINRKASRQKEEQGGKAQ.

It belongs to the universal ribosomal protein uL24 family. Part of the 50S ribosomal subunit.

In terms of biological role, one of two assembly initiator proteins, it binds directly to the 5'-end of the 23S rRNA, where it nucleates assembly of the 50S subunit. Functionally, located at the polypeptide exit tunnel on the outside of the subunit. The chain is Large ribosomal subunit protein uL24 from Metallosphaera sedula (strain ATCC 51363 / DSM 5348 / JCM 9185 / NBRC 15509 / TH2).